A 165-amino-acid chain; its full sequence is Bark lectin isoform 2 (165 aa).

Asn27 and Asn57 each carry an N-linked (GlcNAc...) asparagine glycan. Intrachain disulfides connect Cys33/Cys80 and Cys126/Cys133.

Belongs to the protease inhibitor I3 (leguminous Kunitz-type inhibitor) family. In terms of assembly, dimer.

Functionally, glucose and N-acetylglucosamine binding lectin. Has hemagglutinating activity against human and rabbit erythrocytes which does not require divalent cations. Inhibits factor Xa and, to a lesser extent, trypsin. Does not inhibit neutrophil elastase, human plasma kallikrein, papain, human plasmin, porcine pancreatic kallikrein and bovin chymotrypsin. Has insecticidal activity against the termite species N.corniger. Induces apoptosis in prostrate cancer cell lines DU145 and PC3. This is Bark lectin isoform 2 from Crateva tapia (Garlic-pear tree).